The following is a 728-amino-acid chain: 1,4-alpha-glucan branching enzyme GlgB (728 aa).

The active-site Nucleophile is D405. E458 (proton donor) is an active-site residue.

The protein belongs to the glycosyl hydrolase 13 family. GlgB subfamily. As to quaternary structure, monomer.

The catalysed reaction is Transfers a segment of a (1-&gt;4)-alpha-D-glucan chain to a primary hydroxy group in a similar glucan chain.. It functions in the pathway glycan biosynthesis; glycogen biosynthesis. Functionally, catalyzes the formation of the alpha-1,6-glucosidic linkages in glycogen by scission of a 1,4-alpha-linked oligosaccharide from growing alpha-1,4-glucan chains and the subsequent attachment of the oligosaccharide to the alpha-1,6 position. The chain is 1,4-alpha-glucan branching enzyme GlgB from Escherichia coli O157:H7.